A 382-amino-acid chain; its full sequence is Proton extrusion protein PxcA (382 aa).

A run of 4 helical transmembrane segments spans residues 162-182 (VLLL…TYLI), 257-277 (AIKN…VCLM), 305-325 (IILF…SVLL), and 340-360 (FVNL…KYWI).

It belongs to the CemA family.

It localises to the cell inner membrane. In terms of biological role, required for H(+) efflux immediately after light irradiation to form a rapid H(+) concentration gradient across the thylakoid membranes. Together with PxcL, contributes to transient H(+) uptake following dark to light transition. The chain is Proton extrusion protein PxcA from Synechococcus sp. (strain CC9605).